The chain runs to 1148 residues: Envelopment polyprotein (1148 aa).

The signal sequence occupies residues M1 to A23. The Lumenal segment spans residues A24–M495. Intrachain disulfides connect C34–C159, C68–C165, C117–C136, C141–C146, C183–C193, and C218–C257. N-linked (GlcNAc...) asparagine; by host glycosylation occurs at N142. N-linked (GlcNAc...) asparagine; by host glycosylation occurs at N357. Intrachain disulfides connect C386/C445, C390/C399, C415/C434, and C462/C485. N-linked (GlcNAc...) asparagine; by host glycosylation is present at N409. A helical membrane pass occupies residues L496 to L516. Residues K517–F637 lie on the Cytoplasmic side of the membrane. Residues C526–K543 are binding to the ribonucleoprotein. 2 CCHC-type zinc fingers span residues C555–C575 and C580–C601. 3 binding to the ribonucleoprotein regions span residues F598–L615, K602–K613, and M621–S635. Residues M621 to C644 form the ITAM domain. The YxxL signature appears at Y625 to L628. A helical membrane pass occupies residues F638–A658. Residues E659–N1114 lie on the Lumenal side of the membrane. Disulfide bonds link C745–C780, C749–C787, C761–C894, C775–C905, C790–C913, C816–C825, C833–C842, and C873–C877. A fusion loop region spans residues Y767–C787. An N-linked (GlcNAc...) asparagine; by host glycan is attached at N937. 5 disulfide bridges follow: C979–C1009, C1002–C1054, C1019–C1024, C1055–C1060, and C1094–C1098. The helical transmembrane segment at W1115–C1135 threads the bilayer. 2 binding to the ribonucleoprotein regions span residues L1131–R1143 and L1131–P1148. Residues C1136–P1148 are Cytoplasmic-facing.

It belongs to the hantavirus envelope glycoprotein family. As to quaternary structure, homodimer. Homotetramer; forms heterotetrameric Gn-Gc spikes in the pre-fusion conformation. Interacts (via C-terminus) with the nucleoprotein. Interacts with host TUFM; this interaction contributes to the virus-induced degradation of mitochondria by autophagy, which leads to degradation of host MAVS and inhibition of type I interferon (IFN) responses. Interacts with host MAP1LC3B; this interaction contributes to the virus-induced degradation of mitochondria by autophagy, which leads to degradation of host MAVS and inhibition of type I interferon (IFN) responses. In terms of assembly, homodimer. Homotetramer; forms heterotetrameric Gn-Gc spikes in the pre-fusion conformation. Homotrimer; forms homotrimer in the post-fusion conformation at acidic pH. Interacts (via C-terminus) with the nucleoprotein. In terms of processing, envelope polyprotein precursor is quickly cleaved in vivo just after synthesis, presumably by host signal peptidase.

It localises to the virion membrane. Its subcellular location is the host cell surface. The protein resides in the host Golgi apparatus membrane. It is found in the host endoplasmic reticulum membrane. The protein localises to the host mitochondrion. In terms of biological role, forms homotetramers with glycoprotein C at the surface of the virion. Attaches the virion to host cell receptors including integrin ITGAV/ITGB3. This attachment induces virion internalization predominantly through clathrin-dependent endocytosis. Mediates the assembly and budding of infectious virus particles through its interaction with the nucleocapsid protein and the viral genome. May dysregulate normal immune and endothelial cell responses through an ITAM motif. Translocates to mitochondria, binds to host TUFM and recruits MAP1LC3B. These interactions induce mitochondrial autophagy and therefore destruction of host MAVS leading to inhibition of type I interferon (IFN) responses. Concomitant breakdown of glycoprotein N is apparently prevented by the nucleoprotein that may inhibit Gn-stimulated autophagosome-lysosome fusion. Interacts with the viral genomic RNA. Forms homotetramers with glycoprotein N at the surface of the virion. Attaches the virion to host cell receptors including integrin ITGAV/ITGB3. This attachment induces virion internalization predominantly through clathrin-dependent endocytosis. Class II fusion protein that promotes fusion of viral membrane with host endosomal membrane after endocytosis of the virion. This Homo sapiens (Human) protein is Envelopment polyprotein (GP).